Consider the following 142-residue polypeptide: Hemoglobin subunit alpha-A (142 aa).

Residues 2–142 enclose the Globin domain; sequence VLSGSDKTNV…VGNVLTAKYR (141 aa). Histidine 59 contributes to the O2 binding site. Histidine 88 lines the heme b pocket.

This sequence belongs to the globin family. In terms of assembly, heterotetramer of two alpha chains and two beta chains. As to expression, red blood cells.

Involved in oxygen transport from the lung to the various peripheral tissues. This chain is Hemoglobin subunit alpha-A (HBAA), found in Ara ararauna (Blue-and-yellow macaw).